A 221-amino-acid chain; its full sequence is Small ribosomal subunit protein uS2c (221 aa).

It belongs to the universal ribosomal protein uS2 family.

It is found in the plastid. The protein localises to the chloroplast. This chain is Small ribosomal subunit protein uS2c (rps2), found in Cyanidioschyzon merolae (strain NIES-3377 / 10D) (Unicellular red alga).